A 278-amino-acid polypeptide reads, in one-letter code: NAD kinase (278 aa).

The Proton acceptor role is filled by D56. NAD(+)-binding positions include 56–57 (DG), 132–133 (NE), R158, D160, and 171–176 (TAYNKS).

Belongs to the NAD kinase family. Requires a divalent metal cation as cofactor.

It localises to the cytoplasm. The catalysed reaction is NAD(+) + ATP = ADP + NADP(+) + H(+). In terms of biological role, involved in the regulation of the intracellular balance of NAD and NADP, and is a key enzyme in the biosynthesis of NADP. Catalyzes specifically the phosphorylation on 2'-hydroxyl of the adenosine moiety of NAD to yield NADP. This Streptococcus pyogenes serotype M1 protein is NAD kinase.